The sequence spans 154 residues: UPF0225 protein SG1365 (154 aa).

It belongs to the UPF0225 family.

In Sodalis glossinidius (strain morsitans), this protein is UPF0225 protein SG1365.